The chain runs to 674 residues: DNA ligase (674 aa).

NAD(+) contacts are provided by residues Asp36–Asp40, Ser85–Leu86, and Glu116. The active-site N6-AMP-lysine intermediate is the Lys118. The NAD(+) site is built by Arg139, Glu176, Lys292, and Lys316. Positions 410, 413, 428, and 433 each coordinate Zn(2+). Positions Pro596 to Asn674 constitute a BRCT domain.

Belongs to the NAD-dependent DNA ligase family. LigA subfamily. Mg(2+) serves as cofactor. Mn(2+) is required as a cofactor.

It carries out the reaction NAD(+) + (deoxyribonucleotide)n-3'-hydroxyl + 5'-phospho-(deoxyribonucleotide)m = (deoxyribonucleotide)n+m + AMP + beta-nicotinamide D-nucleotide.. DNA ligase that catalyzes the formation of phosphodiester linkages between 5'-phosphoryl and 3'-hydroxyl groups in double-stranded DNA using NAD as a coenzyme and as the energy source for the reaction. It is essential for DNA replication and repair of damaged DNA. The protein is DNA ligase of Rippkaea orientalis (strain PCC 8801 / RF-1) (Cyanothece sp. (strain PCC 8801)).